Here is a 1031-residue protein sequence, read N- to C-terminus: Error-prone DNA polymerase (1031 aa).

Belongs to the DNA polymerase type-C family. DnaE2 subfamily.

Its subcellular location is the cytoplasm. It carries out the reaction DNA(n) + a 2'-deoxyribonucleoside 5'-triphosphate = DNA(n+1) + diphosphate. Functionally, DNA polymerase involved in damage-induced mutagenesis and translesion synthesis (TLS). It is not the major replicative DNA polymerase. In Pseudomonas aeruginosa (strain ATCC 15692 / DSM 22644 / CIP 104116 / JCM 14847 / LMG 12228 / 1C / PRS 101 / PAO1), this protein is Error-prone DNA polymerase.